Reading from the N-terminus, the 349-residue chain is MKIALDVMGGDNAPDINVDGAKRALQDFPLIEKIYLVGREETVRSSCDRWGLSGPRVEIVPAAEVVEMNESGLLAVRKKKNSSMSISVDLVKSGDADAVVSAGNTGAAVAAATVKLRLLDGVERAGIVTQLPNEFGVCNVTDTGANPDAKPRHLVGYAVMASILARSVYGKQMPKVGVMSNGSEDEKGTDFTKGTFCLLKHLEERGALPFKFVGNVEGHDLFEHEIDVALTDGFTGNVLLKTCEATAKAFSKWLKEELKANPFRMVGAACASGAFRAMKARLSADSVGGSPLLGVRGVTIIAHGSSTPVAIRNALRVSMEMVQQGVNPLIEEEMARLGTIPEVAEVYPK.

This sequence belongs to the PlsX family. In terms of assembly, homodimer. Probably interacts with PlsY.

It localises to the cytoplasm. It carries out the reaction a fatty acyl-[ACP] + phosphate = an acyl phosphate + holo-[ACP]. Its pathway is lipid metabolism; phospholipid metabolism. Functionally, catalyzes the reversible formation of acyl-phosphate (acyl-PO(4)) from acyl-[acyl-carrier-protein] (acyl-ACP). This enzyme utilizes acyl-ACP as fatty acyl donor, but not acyl-CoA. This chain is Phosphate acyltransferase, found in Akkermansia muciniphila (strain ATCC BAA-835 / DSM 22959 / JCM 33894 / BCRC 81048 / CCUG 64013 / CIP 107961 / Muc).